A 437-amino-acid chain; its full sequence is Adenylosuccinate synthetase, organellar chromatophore (437 aa).

GTP is bound by residues Gly12–Lys18 and Gly40–Thr42. Catalysis depends on Asp13, which acts as the Proton acceptor. Asp13 and Gly40 together coordinate Mg(2+). IMP-binding positions include Asp13–Lys16, Asn38–His41, Thr128, Arg142, Gln223, Thr238, and Arg302. The active-site Proton donor is His41. A substrate-binding site is contributed by Thr298–Arg304. GTP contacts are provided by residues Arg304 and Lys330–Asp332.

The protein belongs to the adenylosuccinate synthetase family. Homodimer. The cofactor is Mg(2+).

The protein resides in the plastid. The protein localises to the organellar chromatophore. The catalysed reaction is IMP + L-aspartate + GTP = N(6)-(1,2-dicarboxyethyl)-AMP + GDP + phosphate + 2 H(+). It participates in purine metabolism; AMP biosynthesis via de novo pathway; AMP from IMP: step 1/2. Functionally, plays an important role in the de novo pathway and in the salvage pathway of purine nucleotide biosynthesis. Catalyzes the first committed step in the biosynthesis of AMP from IMP. This is Adenylosuccinate synthetase, organellar chromatophore from Paulinella chromatophora.